The primary structure comprises 98 residues: NADH-ubiquinone oxidoreductase chain 4L (98 aa).

3 consecutive transmembrane segments (helical) span residues 1–21 (MEQI…GVLT), 28–48 (STLL…VLLI), and 61–81 (LILL…LVTI).

It belongs to the complex I subunit 4L family. Core subunit of respiratory chain NADH dehydrogenase (Complex I) which is composed of 45 different subunits.

It is found in the mitochondrion inner membrane. The catalysed reaction is a ubiquinone + NADH + 5 H(+)(in) = a ubiquinol + NAD(+) + 4 H(+)(out). Its function is as follows. Core subunit of the mitochondrial membrane respiratory chain NADH dehydrogenase (Complex I) which catalyzes electron transfer from NADH through the respiratory chain, using ubiquinone as an electron acceptor. Part of the enzyme membrane arm which is embedded in the lipid bilayer and involved in proton translocation. The sequence is that of NADH-ubiquinone oxidoreductase chain 4L (MT-ND4L) from Monodelphis domestica (Gray short-tailed opossum).